Here is a 173-residue protein sequence, read N- to C-terminus: Shikimate kinase 1 (173 aa).

14–19 is an ATP binding site; that stretch reads GAGKST. Residue Ser-18 participates in Mg(2+) binding. Residues Asp-36, Arg-60, and Gly-82 each contribute to the substrate site. Arg-120 contributes to the ATP binding site. A substrate-binding site is contributed by Arg-140. ATP is bound at residue Gln-157.

It belongs to the shikimate kinase family. In terms of assembly, monomer. It depends on Mg(2+) as a cofactor.

It localises to the cytoplasm. The enzyme catalyses shikimate + ATP = 3-phosphoshikimate + ADP + H(+). The protein operates within metabolic intermediate biosynthesis; chorismate biosynthesis; chorismate from D-erythrose 4-phosphate and phosphoenolpyruvate: step 5/7. Catalyzes the specific phosphorylation of the 3-hydroxyl group of shikimic acid using ATP as a cosubstrate. The sequence is that of Shikimate kinase 1 from Yersinia pseudotuberculosis serotype O:1b (strain IP 31758).